The chain runs to 277 residues: NADPH-dependent 7-cyano-7-deazaguanine reductase (277 aa).

83-85 serves as a coordination point for substrate; it reads VES. 85–86 is a binding site for NADPH; sequence SK. The active-site Thioimide intermediate is C184. D191 functions as the Proton donor in the catalytic mechanism. A substrate-binding site is contributed by 223–224; the sequence is HE. 252–253 lines the NADPH pocket; it reads RG.

This sequence belongs to the GTP cyclohydrolase I family. QueF type 2 subfamily. In terms of assembly, homodimer.

It is found in the cytoplasm. The catalysed reaction is 7-aminomethyl-7-carbaguanine + 2 NADP(+) = 7-cyano-7-deazaguanine + 2 NADPH + 3 H(+). It participates in tRNA modification; tRNA-queuosine biosynthesis. Its function is as follows. Catalyzes the NADPH-dependent reduction of 7-cyano-7-deazaguanine (preQ0) to 7-aminomethyl-7-deazaguanine (preQ1). The sequence is that of NADPH-dependent 7-cyano-7-deazaguanine reductase from Ralstonia nicotianae (strain ATCC BAA-1114 / GMI1000) (Ralstonia solanacearum).